Reading from the N-terminus, the 465-residue chain is Putative multidrug resistance protein MdtD (465 aa).

The next 13 membrane-spanning stretches (helical) occupy residues 12-32 (LWIV…VNTA), 49-69 (SVIV…GWLA), 72-92 (IGVK…SLMC), 102-124 (ILSR…LTVM), 138-158 (FVTL…GFLV), 165-185 (WIFL…LLLM), 195-215 (FDIS…LALD), 219-239 (GLGL…IALG), 267-287 (LVGS…TPIF), 290-310 (IGLG…IIGS), 342-362 (LSLP…VLFF), 393-413 (LLSM…GILL), and 430-450 (SAFL…ALIF).

Belongs to the major facilitator superfamily. TCR/Tet family.

The protein localises to the cell inner membrane. This chain is Putative multidrug resistance protein MdtD, found in Yersinia pseudotuberculosis serotype O:1b (strain IP 31758).